The sequence spans 469 residues: ATP synthase subunit beta (469 aa).

Glycine 156–threonine 163 contributes to the ATP binding site.

Belongs to the ATPase alpha/beta chains family. F-type ATPases have 2 components, CF(1) - the catalytic core - and CF(0) - the membrane proton channel. CF(1) has five subunits: alpha(3), beta(3), gamma(1), delta(1), epsilon(1). CF(0) has three main subunits: a(1), b(2) and c(9-12). The alpha and beta chains form an alternating ring which encloses part of the gamma chain. CF(1) is attached to CF(0) by a central stalk formed by the gamma and epsilon chains, while a peripheral stalk is formed by the delta and b chains.

It is found in the cell membrane. The catalysed reaction is ATP + H2O + 4 H(+)(in) = ADP + phosphate + 5 H(+)(out). Produces ATP from ADP in the presence of a proton gradient across the membrane. The catalytic sites are hosted primarily by the beta subunits. In Bacillus mycoides (strain KBAB4) (Bacillus weihenstephanensis), this protein is ATP synthase subunit beta.